The sequence spans 227 residues: Zinc finger protein ZAT10 (227 aa).

The segment at 80-102 adopts a C2H2-type 1 zinc-finger fold; the sequence is YKCSVCDKTFSSYQALGGHKASH. The interval 96–128 is disordered; sequence GGHKASHRKNLSQTLSGGGDDHSTSSATTTSAV. Positions 119–128 are enriched in low complexity; it reads TSSATTTSAV. The C2H2-type 2 zinc finger occupies 136 to 158; sequence HVCTICNKSFPSGQALGGHKRCH. A disordered region spans residues 168-189; that stretch reads SSVSNSEGAGSTSHVSSSHRGF. Positions 174-186 are enriched in polar residues; the sequence is EGAGSTSHVSSSH.

In terms of tissue distribution, expressed in roots, stems and leaves.

It is found in the nucleus. Functionally, transcriptional repressor involved in abiotic stress responses. Can repress the stress responsive genes DREB1A and LTI78. Probably involved in jasmonate (JA) early signaling response. May regulate the expression of the JA biosynthesis gene LOX3 and control the expression of TIFY10A/JAZ1, a key repressor in the JA signaling cascade. This is Zinc finger protein ZAT10 (ZAT10) from Arabidopsis thaliana (Mouse-ear cress).